The following is a 299-amino-acid chain: Non-homologous end-joining factor 1 (299 aa).

Residues 1-135 form a globular head region; the sequence is MEELEQGLLM…ASPSLVSQHL (135 aa). Residues 128 to 170 are a coiled coil; that stretch reads PSLVSQHLIRPLMGMSLALQCQVRELATLLHMKDLEIQDYQES. Residues Ser132, Ser203, Ser245, and Ser251 each carry the phosphoserine; by PRKDC modification. Positions 224–288 are C-terminal tail; that stretch reads QEVQVGQKHQ…GPLQRPQLSK (65 aa). A compositionally biased stretch (polar residues) spans 255–266; sequence NQPEQLVSSAPT. The tract at residues 255 to 299 is disordered; sequence NQPEQLVSSAPTLSAPEKESTGTSGPLQRPQLSKVKRKKPRGLFS. Ser263 carries the post-translational modification Phosphoserine. The residue at position 266 (Thr266) is a Phosphothreonine. The residue at position 287 (Ser287) is a Phosphoserine. The span at 288 to 299 shows a compositional bias: basic residues; it reads KVKRKKPRGLFS. Positions 289–299 match the XLM motif; that stretch reads VKRKKPRGLFS.

It belongs to the XRCC4-XLF family. XLF subfamily. In terms of assembly, homodimer; mainly exists as a homodimer when not associated with XRCC4. Interacts with XRCC4; the interaction is direct and is mediated via a head-to-head interaction between N-terminal head regions. Component of the core long-range non-homologous end joining (NHEJ) complex (also named DNA-PK complex) composed of PRKDC, LIG4, XRCC4, XRCC6/Ku70, XRCC5/Ku86 and NHEJ1/XLF. Additional component of the NHEJ complex includes PAXX. Following autophosphorylation, PRKDC dissociates from DNA, leading to formation of the short-range NHEJ complex, composed of LIG4, XRCC4, XRCC6/Ku70, XRCC5/Ku86 and NHEJ1/XLF. Interacts with POLL (DNA polymerase lambda); promoting POLL recruitment to double-strand breaks (DSBs) and stimulation of the end-filling activity of POLL. In terms of processing, phosphorylated by PRKDC at the C-terminus in response to DNA damage. Phosphorylations by PRKDC at the C-terminus of XRCC4 and NHEJ1/XLF are highly redundant and regulate ability of the XRCC4-NHEJ1/XLF subcomplex to bridge DNA. Phosphorylation does not prevent interaction with XRCC4 but disrupts ability to bridge DNA and promotes detachment from DNA. As to expression, ubiquitously expressed.

The protein resides in the nucleus. Its subcellular location is the chromosome. DNA repair protein involved in DNA non-homologous end joining (NHEJ); it is required for double-strand break (DSB) repair and V(D)J recombination and is also involved in telomere maintenance. Plays a key role in NHEJ by promoting the ligation of various mismatched and non-cohesive ends. Together with PAXX, collaborates with DNA polymerase lambda (POLL) to promote joining of non-cohesive DNA ends. May act in concert with XRCC5-XRCC6 (Ku) to stimulate XRCC4-mediated joining of blunt ends and several types of mismatched ends that are non-complementary or partially complementary. In some studies, has been shown to associate with XRCC4 to form alternating helical filaments that bridge DNA and act like a bandage, holding together the broken DNA until it is repaired. Alternatively, it has also been shown that rather than forming filaments, a single NHEJ1 dimer interacts through both head domains with XRCC4 to promote the close alignment of DNA ends. The XRCC4-NHEJ1/XLF subcomplex binds to the DNA fragments of a DSB in a highly diffusive manner and robustly bridges two independent DNA molecules, holding the broken DNA fragments in close proximity to one other. The mobility of the bridges ensures that the ends remain accessible for further processing by other repair factors. Binds DNA in a length-dependent manner. This chain is Non-homologous end-joining factor 1, found in Homo sapiens (Human).